The chain runs to 369 residues: Histidinol-phosphate aminotransferase (369 aa).

K223 bears the N6-(pyridoxal phosphate)lysine mark.

This sequence belongs to the class-II pyridoxal-phosphate-dependent aminotransferase family. Histidinol-phosphate aminotransferase subfamily. Homodimer. The cofactor is pyridoxal 5'-phosphate.

It carries out the reaction L-histidinol phosphate + 2-oxoglutarate = 3-(imidazol-4-yl)-2-oxopropyl phosphate + L-glutamate. Its pathway is amino-acid biosynthesis; L-histidine biosynthesis; L-histidine from 5-phospho-alpha-D-ribose 1-diphosphate: step 7/9. Functionally, catalyzes the conversion of imidazole acetol phosphate to histidinol phosphate. Can also transaminate aromatic amino acids and histidine in addition to histidinol phosphate. The chain is Histidinol-phosphate aminotransferase from Zymomonas mobilis subsp. mobilis (strain ATCC 31821 / ZM4 / CP4).